The sequence spans 355 residues: Probable low-specificity L-threonine aldolase 2 (355 aa).

At lysine 211 the chain carries N6-(pyridoxal phosphate)lysine.

This sequence belongs to the threonine aldolase family. Pyridoxal 5'-phosphate serves as cofactor. As to expression, expressed in roots, leaf vasculature and flowers.

The enzyme catalyses L-threonine = acetaldehyde + glycine. It carries out the reaction L-allo-threonine = acetaldehyde + glycine. It participates in amino-acid degradation; L-threonine degradation via aldolase pathway; acetaldehyde and glycine from L-threonine: step 1/1. Threonine aldolase involved in threonine degradation to glycine. May play a role in the removal of L-allo-threonine. This chain is Probable low-specificity L-threonine aldolase 2 (THA2), found in Arabidopsis thaliana (Mouse-ear cress).